Consider the following 334-residue polypeptide: Ketol-acid reductoisomerase (NADP(+)) (334 aa).

The KARI N-terminal Rossmann domain maps to 1–181; that stretch reads MTTVYYDQDV…GATRAGVIET (181 aa). Residues 25-28, Arg-48, Ser-52, and 82-85 each bind NADP(+); these read YGSQ and DEIQ. Residue His-107 is part of the active site. Gly-133 lines the NADP(+) pocket. The region spanning 182 to 327 is the KARI C-terminal knotted domain; it reads TFKEETETDL…RELREMMPFI (146 aa). Mg(2+) is bound by residues Asp-190, Glu-194, Glu-226, and Glu-230. Ser-251 contacts substrate.

This sequence belongs to the ketol-acid reductoisomerase family. The cofactor is Mg(2+).

It carries out the reaction (2R)-2,3-dihydroxy-3-methylbutanoate + NADP(+) = (2S)-2-acetolactate + NADPH + H(+). The enzyme catalyses (2R,3R)-2,3-dihydroxy-3-methylpentanoate + NADP(+) = (S)-2-ethyl-2-hydroxy-3-oxobutanoate + NADPH + H(+). Its pathway is amino-acid biosynthesis; L-isoleucine biosynthesis; L-isoleucine from 2-oxobutanoate: step 2/4. It functions in the pathway amino-acid biosynthesis; L-valine biosynthesis; L-valine from pyruvate: step 2/4. Functionally, involved in the biosynthesis of branched-chain amino acids (BCAA). Catalyzes an alkyl-migration followed by a ketol-acid reduction of (S)-2-acetolactate (S2AL) to yield (R)-2,3-dihydroxy-isovalerate. In the isomerase reaction, S2AL is rearranged via a Mg-dependent methyl migration to produce 3-hydroxy-3-methyl-2-ketobutyrate (HMKB). In the reductase reaction, this 2-ketoacid undergoes a metal-dependent reduction by NADPH to yield (R)-2,3-dihydroxy-isovalerate. The chain is Ketol-acid reductoisomerase (NADP(+)) from Staphylococcus aureus (strain Mu3 / ATCC 700698).